The sequence spans 366 residues: D-alanine--D-alanine ligase (366 aa).

The ATP-grasp domain maps to 146–352; it reads KICFEHAGLQ…YTELINRLIE (207 aa). 179 to 234 contacts ATP; the sequence is EKKLRYPMFVKPANMGSSVGISKAHNRNELIEAIELALAYDRKFLIEKAINAREME. Positions 305, 319, and 321 each coordinate Mg(2+).

The protein belongs to the D-alanine--D-alanine ligase family. Mg(2+) is required as a cofactor. The cofactor is Mn(2+).

The protein localises to the cytoplasm. The enzyme catalyses 2 D-alanine + ATP = D-alanyl-D-alanine + ADP + phosphate + H(+). The protein operates within cell wall biogenesis; peptidoglycan biosynthesis. Functionally, cell wall formation. The chain is D-alanine--D-alanine ligase from Chloroherpeton thalassium (strain ATCC 35110 / GB-78).